Here is a 291-residue protein sequence, read N- to C-terminus: Nucleotide-binding protein Cthe_0113 (291 aa).

Residue 8 to 15 (GISGAGKS) participates in ATP binding. 59 to 62 (DIRG) is a binding site for GTP.

Belongs to the RapZ-like family.

Displays ATPase and GTPase activities. The sequence is that of Nucleotide-binding protein Cthe_0113 from Acetivibrio thermocellus (strain ATCC 27405 / DSM 1237 / JCM 9322 / NBRC 103400 / NCIMB 10682 / NRRL B-4536 / VPI 7372) (Clostridium thermocellum).